A 317-amino-acid chain; its full sequence is Transaldolase (317 aa).

Residue lysine 126 is the Schiff-base intermediate with substrate of the active site.

It belongs to the transaldolase family. Type 1 subfamily. In terms of assembly, homodimer.

It localises to the cytoplasm. The enzyme catalyses D-sedoheptulose 7-phosphate + D-glyceraldehyde 3-phosphate = D-erythrose 4-phosphate + beta-D-fructose 6-phosphate. Its pathway is carbohydrate degradation; pentose phosphate pathway; D-glyceraldehyde 3-phosphate and beta-D-fructose 6-phosphate from D-ribose 5-phosphate and D-xylulose 5-phosphate (non-oxidative stage): step 2/3. Functionally, transaldolase is important for the balance of metabolites in the pentose-phosphate pathway. The protein is Transaldolase of Burkholderia cenocepacia (strain ATCC BAA-245 / DSM 16553 / LMG 16656 / NCTC 13227 / J2315 / CF5610) (Burkholderia cepacia (strain J2315)).